We begin with the raw amino-acid sequence, 624 residues long: D-3-phosphoglycerate dehydrogenase 2, chloroplastic (624 aa).

Residues 1 to 49 constitute a chloroplast transit peptide; sequence MAFSSSCSSVKAVNSRWTSPSPSPSSRFAVLPAFLHRRYATSVKLTAIS. A Phosphoserine modification is found at S71. NAD(+)-binding positions include 231–232, D251, 310–312, and D336; these read KV and VAR. Residue R312 is part of the active site. The active site involves E341. H360 acts as the Proton donor in catalysis. 360–363 lines the NAD(+) pocket; the sequence is HLGA. The 73-residue stretch at 552-624 folds into the ACT domain; it reads LILCRQVDQP…AIEEFVFLKL (73 aa).

Belongs to the D-isomer specific 2-hydroxyacid dehydrogenase family. In terms of tissue distribution, ubiquitous, but highly expressed in roots and in dark-grown leaf tissues. Expressed in the vasculature, stigma, anther filaments and shoot apical meristem. Not detected in the root meristem or in embryo.

It localises to the plastid. The protein resides in the chloroplast. The enzyme catalyses (2R)-3-phosphoglycerate + NAD(+) = 3-phosphooxypyruvate + NADH + H(+). It participates in amino-acid biosynthesis; L-serine biosynthesis; L-serine from 3-phospho-D-glycerate: step 1/3. Its activity is regulated as follows. Inhibited by 90 uM 3-phosphonooxypyruvate, but not by Ser, Thr, Val, Gly Trp, O-acetyl-L-Ser and Cys. Involved in the plastidial phosphorylated pathway of serine biosynthesis (PPSB). This is D-3-phosphoglycerate dehydrogenase 2, chloroplastic (PGDH2) from Arabidopsis thaliana (Mouse-ear cress).